A 491-amino-acid polypeptide reads, in one-letter code: Cobyric acid synthase (491 aa).

A GATase cobBQ-type domain is found at Arg-246–Leu-432. Cys-328 serves as the catalytic Nucleophile. The active site involves His-424.

The protein belongs to the CobB/CobQ family. CobQ subfamily.

The protein operates within cofactor biosynthesis; adenosylcobalamin biosynthesis. In terms of biological role, catalyzes amidations at positions B, D, E, and G on adenosylcobyrinic A,C-diamide. NH(2) groups are provided by glutamine, and one molecule of ATP is hydrogenolyzed for each amidation. The chain is Cobyric acid synthase from Novosphingobium aromaticivorans (strain ATCC 700278 / DSM 12444 / CCUG 56034 / CIP 105152 / NBRC 16084 / F199).